The primary structure comprises 269 residues: MAALSELLGDLVADVDGLFLFTPSSSHYEQFAETDVPTVVIAPENTVEAETFVELPLQFQNVKDRIRFGVEGAMEQSIVEAGDTIACNVGTFGGDPDSLVRVRVEENMRSGIYDLFANSRADPGVIRDVFEVAIELGKKGQKGEPVGALFIVGDAGKVMNKSRPLSYNPFEKSHVYVGDPIVNVMLKEFSRLDGAFVISDSGKIVSAYRYLEPSAEGVDIPKGLGARHMAGGAITRDTNATAIVLSESDGLVRAFKGGKMILEIDPEAY.

Residues 109–266 (RSGIYDLFAN…GGKMILEIDP (158 aa)) enclose the DAC domain.

The protein belongs to the adenylate cyclase family. DacZ subfamily. Requires Mn(2+) as cofactor.

It catalyses the reaction 2 ATP = 3',3'-c-di-AMP + 2 diphosphate. Functionally, diadenylate cyclase that catalyzes the condensation of 2 ATP molecules into cyclic di-AMP (c-di-AMP). c-di-AMP is a second messenger for intracellular signal transduction involved in the control of important regulatory processes such as osmoregulation. Is essential for H.volcanii. Overexpression of DacZ leads to cell death, suggesting the need for tight regulation of c-di-AMP levels. Cannot use GTP as substrate. The polypeptide is Diadenylate cyclase (Haloferax volcanii (strain ATCC 29605 / DSM 3757 / JCM 8879 / NBRC 14742 / NCIMB 2012 / VKM B-1768 / DS2) (Halobacterium volcanii)).